The primary structure comprises 30 residues: Cyclotide cter-P (30 aa).

Positions 1–30 (GIPCGESCVFIPCITAAIGCSCKSKVCYRN) form a cross-link, cyclopeptide (Gly-Asn). 3 disulfide bridges follow: Cys4–Cys20, Cys8–Cys22, and Cys13–Cys27.

This is a cyclic peptide.

The protein localises to the secreted. In terms of biological role, probably participates in a plant defense mechanism. The protein is Cyclotide cter-P of Clitoria ternatea (Butterfly pea).